Here is a 117-residue protein sequence, read N- to C-terminus: Large ribosomal subunit protein bL19 (117 aa).

It belongs to the bacterial ribosomal protein bL19 family.

Functionally, this protein is located at the 30S-50S ribosomal subunit interface and may play a role in the structure and function of the aminoacyl-tRNA binding site. This Sorangium cellulosum (strain So ce56) (Polyangium cellulosum (strain So ce56)) protein is Large ribosomal subunit protein bL19.